The chain runs to 534 residues: Inorganic phosphate transporter 1-4 (534 aa).

The Cytoplasmic segment spans residues 1-24; that stretch reads MAREQLQVLNALDVAKTQWYHFTA. A helical transmembrane segment spans residues 25–45; sequence IIIAGMGFFTDAYDLFCISLV. Residues 46-70 are Extracellular-facing; it reads TKLLGRIYYHVEGAQKPGTLPPNVA. A helical transmembrane segment spans residues 71-91; sequence AAVNGVAFCGTLAGQLFFGWL. Residues 92–99 lie on the Cytoplasmic side of the membrane; it reads GDKLGRKK. A helical transmembrane segment spans residues 100-120; sequence VYGMTLMVMVLCSIASGLSFG. Topologically, residues 121-131 are extracellular; sequence HEPKAVMATLC. Residues 132–152 form a helical membrane-spanning segment; it reads FFRFWLGFGIGGDYPLSATIM. Residues 153–161 lie on the Cytoplasmic side of the membrane; that stretch reads SEYANKKTR. A helical transmembrane segment spans residues 162–182; it reads GAFVSAVFAMQGFGIMAGGIF. Residues 183–211 lie on the Extracellular side of the membrane; sequence AIIISSAFEAKFPSPAYADDALGSTIPQA. A helical membrane pass occupies residues 212-232; it reads DLVWRIILMAGAIPAAMTYYS. The Cytoplasmic segment spans residues 233-293; it reads RSKMPETARY…GLFSKEFMSR (61 aa). Residues 294–314 traverse the membrane as a helical segment; it reads HGLHLLGTTSTWFLLDIAFYS. Residues 315-349 lie on the Extracellular side of the membrane; the sequence is QNLFQKDIFSAIGWIPPAQSMNAIQEVFKIARAQT. Residues 350–370 form a helical membrane-spanning segment; that stretch reads LIALCSTVPGYWFTVAFIDVI. Residues 371–372 are Cytoplasmic-facing; that stretch reads GR. The chain crosses the membrane as a helical span at residues 373–393; that stretch reads FAIQMMGFFFMTVFMFALAIP. Residues 394 to 403 lie on the Extracellular side of the membrane; that stretch reads YNHWTHKENR. Residues 404–424 form a helical membrane-spanning segment; the sequence is IGFVIMYSLTFFFANFGPNAT. Over 425–442 the chain is Cytoplasmic; sequence TFVVPAEIFPARFRSTCH. Residues 443–463 form a helical membrane-spanning segment; sequence GISAASGKLGAMVGAFGFLYL. Topologically, residues 464 to 484 are extracellular; it reads AQNPDKDKTDAGYPPGIGVRN. The chain crosses the membrane as a helical span at residues 485–505; it reads SLIVLGVVNFLGILFTFLVPE. The Cytoplasmic segment spans residues 506–534; the sequence is SKGKSLEEMSGENEDNENSNNDSRTVPIV. Positions 512–534 are disordered; sequence EEMSGENEDNENSNNDSRTVPIV. A phosphoserine mark is found at Ser-524 and Ser-528.

The protein belongs to the major facilitator superfamily. Phosphate:H(+) symporter (TC 2.A.1.9) family. Interacts with NLA. In terms of processing, ubiquitinated by NLA. Ubiquitination of PHT1-4 leads to its degradation by the proteasome. As to expression, mostly expressed in roots, in tissues connecting the lateral roots to the primary root. Also present in flowers, in senescing anther filaments and in the abscission zone at the base of siliques. Expressed in hydathodes and axillary buds, and in some senescing leaves. After Pi starvation, localized in all cells of undifferentiated root segments, including root tips and root hairs, and in the epidermis, cortex and stellar regions of mature root segments.

It is found in the cell membrane. In terms of biological role, high-affinity transporter for external inorganic phosphate. Acts as a H(+):phosphate symporter in both low- and high-Pi conditions. Confers sensitivity to arsenate. This chain is Inorganic phosphate transporter 1-4 (PHT1-4), found in Arabidopsis thaliana (Mouse-ear cress).